A 121-amino-acid polypeptide reads, in one-letter code: MTQSTEDTLLRLAAVIDSRKGGDPDQSYVSRLFHKGDDAVLKKIGEEATEVVLAAKDVRQGGAPSALVGEVADLWFHCLVMLSHFDLSPADVIAELERREGLSGIEEKALRKRREREENGG.

The protein belongs to the PRA-PH family.

The protein resides in the cytoplasm. It catalyses the reaction 1-(5-phospho-beta-D-ribosyl)-ATP + H2O = 1-(5-phospho-beta-D-ribosyl)-5'-AMP + diphosphate + H(+). It participates in amino-acid biosynthesis; L-histidine biosynthesis; L-histidine from 5-phospho-alpha-D-ribose 1-diphosphate: step 2/9. The chain is Phosphoribosyl-ATP pyrophosphatase from Burkholderia cenocepacia (strain HI2424).